Here is a 310-residue protein sequence, read N- to C-terminus: D-alanine--D-alanine ligase (310 aa).

Residues 105–301 (KQAFVSAGIL…FEELVERIIL (197 aa)) form the ATP-grasp domain. An ATP-binding site is contributed by 133–186 (SFGLPLVVKPVQEGSSVGISIVKEESQLAAAVKLAFRHDDEILVEQFIKGQEVQ). The Mg(2+) site is built by Asp-254, Glu-267, and Asn-269.

Belongs to the D-alanine--D-alanine ligase family. Requires Mg(2+) as cofactor. Mn(2+) is required as a cofactor.

It is found in the cytoplasm. It catalyses the reaction 2 D-alanine + ATP = D-alanyl-D-alanine + ADP + phosphate + H(+). Its pathway is cell wall biogenesis; peptidoglycan biosynthesis. Cell wall formation. In Pelobacter propionicus (strain DSM 2379 / NBRC 103807 / OttBd1), this protein is D-alanine--D-alanine ligase.